Reading from the N-terminus, the 862-residue chain is Phosphofurin acidic cluster sorting protein 2 (862 aa).

Disordered stretches follow at residues 151 to 215 (HEDS…TTSM), 263 to 436 (LDVE…TRSQ), and 658 to 713 (SSAT…SQGV). Low complexity predominate over residues 263–272 (LDVENPSDSG). Residues 313-328 (SHREPPSPADVPEKTR) show a composition bias toward basic and acidic residues. The span at 332-344 (GKQQLSDSVSDTV) shows a compositional bias: polar residues. Phosphoserine occurs at positions 361, 387, 424, 662, and 665. Low complexity-rich tracts occupy residues 658–693 (SSATSGDSDDAAPSSSSILSSTPPSASTSPAAKEAS) and 700–710 (PSVSGGLSSPS).

This sequence belongs to the PACS family. As to quaternary structure, interacts with BID and PKD2. Interacts with SIRT1. Interacts with HDAC1. Interacts with TRPV1. Interacts with WDR37.

The protein resides in the endoplasmic reticulum. It localises to the mitochondrion. Functionally, multifunctional sorting protein that controls the endoplasmic reticulum (ER)-mitochondria communication, including the apposition of mitochondria with the ER and ER homeostasis. In addition, in response to apoptotic inducer, translocates BIB to mitochondria, which initiates a sequence of events including the formation of mitochondrial truncated BID, the release of cytochrome c, the activation of caspase-3 thereby causing cell death. May also involved in ion channel trafficking, directing acidic cluster-containing ion channels to distinct subcellular compartments. This chain is Phosphofurin acidic cluster sorting protein 2 (Pacs2), found in Mus musculus (Mouse).